A 1212-amino-acid chain; its full sequence is Histone demethylase UTY (1212 aa).

TPR repeat units lie at residues 88 to 121, 125 to 158, 165 to 193, 200 to 233, 245 to 278, 279 to 312, 313 to 346, and 347 to 380; these read SDFF…QTDY, AAFL…DPNF, HLRL…IDCN, VEIQ…ESLP, GWMH…DPNS, GQSW…SEAS, ADTW…DHGH, and AAAW…KSCN. Residues 530–539 are compositionally biased toward basic and acidic residues; it reads FTKESKDSRS. The tract at residues 530-555 is disordered; sequence FTKESKDSRSKSLTSKTSRKDRDTSN. Thr752 carries the phosphothreonine modification. Residues 865–886 form a disordered region; the sequence is RRTQVKDYSDNESTCSDNSGRR. In terms of domain architecture, JmjC spans 907–1070; that stretch reads KWKLQLHELT…YKLAVERYEW (164 aa). Fe cation contacts are provided by His958, Glu960, and His1038. The Zn(2+) site is built by Cys1143, Cys1146, Cys1170, and Cys1173.

This sequence belongs to the UTX family. In terms of assembly, binds TLE1 and TLE2. L-ascorbate is required as a cofactor. The cofactor is Fe(2+).

It localises to the nucleus. It carries out the reaction N(6),N(6),N(6)-trimethyl-L-lysyl(27)-[histone H3] + 2 2-oxoglutarate + 2 O2 = N(6)-methyl-L-lysyl(27)-[histone H3] + 2 formaldehyde + 2 succinate + 2 CO2. Functionally, male-specific histone demethylase that catalyzes trimethylated 'Lys-27' (H3K27me3) demethylation in histone H3. Has relatively low KDM activity. This is Histone demethylase UTY (Uty) from Mus musculus (Mouse).